The sequence spans 309 residues: Protein FdhE homolog (309 aa).

It belongs to the FdhE family.

It is found in the cytoplasm. Functionally, necessary for formate dehydrogenase activity. The polypeptide is Protein FdhE homolog (Enterobacter sp. (strain 638)).